Reading from the N-terminus, the 63-residue chain is MGMRMMFTVFLLVVLATTVVSFTSDRAPDGRNAAAKAFGLITPTVRKGCCSNPACMLKNPNLC.

An N-terminal signal peptide occupies residues 1 to 21 (MGMRMMFTVFLLVVLATTVVS). The propeptide occupies 22–47 (FTSDRAPDGRNAAAKAFGLITPTVRK). Cystine bridges form between Cys-49–Cys-55 and Cys-50–Cys-63. Residues 51-53 (SNP) form a ser-Xaa-Pro motif, crucial for potent interaction with nAChR region.

It belongs to the conotoxin A superfamily. In terms of tissue distribution, expressed by the venom duct.

It localises to the secreted. Its function is as follows. This amidated peptide potently and teversibly inhibits Cav2.2/CACNA1B. Steady-state inactivation is enhanced at hyperpolarized membrane potentials. Also shows a weak interaction at alpha-3-beta-4/ CHRNA3-CHRNB4 and alpha-7/CHRNA7 nAChRs subtypes. In vivo, exhibits a potent analgesic activity in rat partial sciatic nerve injury and chronic constriction injury models. The chain is Omega-conotoxin Eu1.6 from Conus eburneus (Ivory cone).